The chain runs to 123 residues: MALLKISVVVPEGEVYTGEVKSVVLPGVEGEFGVLYGHSNMITLLQAGVVEIETENQKEHIAINWGYAEVTNERVDILADGAVFIKKGSDDRDDAISRAKKLLEDASSDRLAVSSVLAKIESL.

It belongs to the ATPase epsilon chain family. As to quaternary structure, F-type ATPases have 2 components, CF(1) - the catalytic core - and CF(0) - the membrane proton channel. CF(1) has five subunits: alpha(3), beta(3), gamma(1), delta(1), epsilon(1). CF(0) has three main subunits: a, b and c.

It is found in the cell inner membrane. Functionally, produces ATP from ADP in the presence of a proton gradient across the membrane. The chain is ATP synthase epsilon chain from Helicobacter pylori (strain P12).